Reading from the N-terminus, the 65-residue chain is Large ribosomal subunit protein uL30 (65 aa).

Belongs to the universal ribosomal protein uL30 family. As to quaternary structure, part of the 50S ribosomal subunit.

This chain is Large ribosomal subunit protein uL30, found in Chloroflexus aurantiacus (strain ATCC 29366 / DSM 635 / J-10-fl).